Consider the following 548-residue polypeptide: Glutamate--tRNA ligase (548 aa).

The 'HIGH' region signature appears at 102–112 (PSPSGPLHIGH).

The protein belongs to the class-I aminoacyl-tRNA synthetase family. Glutamate--tRNA ligase type 2 subfamily.

The protein localises to the cytoplasm. It carries out the reaction tRNA(Glu) + L-glutamate + ATP = L-glutamyl-tRNA(Glu) + AMP + diphosphate. Functionally, catalyzes the attachment of glutamate to tRNA(Glu) in a two-step reaction: glutamate is first activated by ATP to form Glu-AMP and then transferred to the acceptor end of tRNA(Glu). The polypeptide is Glutamate--tRNA ligase (Thermoplasma volcanium (strain ATCC 51530 / DSM 4299 / JCM 9571 / NBRC 15438 / GSS1)).